A 468-amino-acid chain; its full sequence is MTISRADLQIASSAEPKTHGNLNESFAPEIRQTASTIASLSIFGTPSDQECQPIPVVPRSSSSDELRVWRVTSAGLVEVDAKTMGAFLDKPKTDKTNVHGEGNGIRYGMSSMQGWRICMEDSHIAEAIMSQSSPYKDWSFFAVFDGHAGHHIANRASSQLLEHLISSEEFREMTKTLEENNGVLTDSTLKLLEKGIKKGFLSFDEISKTSNDISKSGCTAVCAIVTPTHFIIGNLGDSRAVVAGKNEIFGTEDHKPYLEKERKRIEGAGGSVMIQRINGSLAVSRAFGDYEYKDDPRLPADQQLVSPEPDVYIRERNLENDQFMVVACDGIYDVMTNEELAEFVKDRLSVHSDLREVCDDVLDECLVKGSRDNMTMVVVCFPAAPEVNIHRKEAEEAWVSRVKTVINQFLDEAVAAEDFKQEEDMVTLKSILDKVTANGLLPTDLRVPEHTVTTLAQKILTQRDIKHV.

The disordered stretch occupies residues 1 to 23 (MTISRADLQIASSAEPKTHGNLN). In terms of domain architecture, PPM-type phosphatase spans 106–381 (RYGMSSMQGW…DNMTMVVVCF (276 aa)). Positions 145, 146, 329, and 372 each coordinate Mn(2+).

This sequence belongs to the PP2C family. It depends on Mg(2+) as a cofactor. Requires Mn(2+) as cofactor. Expressed in neurons of the nerve ring and motor neurons of the ventral nerve cord.

The protein resides in the synapse. The catalysed reaction is O-phospho-L-seryl-[protein] + H2O = L-seryl-[protein] + phosphate. It carries out the reaction O-phospho-L-threonyl-[protein] + H2O = L-threonyl-[protein] + phosphate. Functionally, probable phosphatase which regulates axon termination in ALM and PLM neurons, and synaptic branch extension and/or stabilization in PLM neurons. Plays a role in synapse formation in GABAergic DD motor neurons probably by dephosphorylating pmk-3 thereby negatively regulating a MAP kinase pathway that includes dlk-1, mkk-4 and pmk-3. The chain is Protein phosphatase ppm-1.A from Caenorhabditis elegans.